The primary structure comprises 217 residues: Small ribosomal subunit protein uS3 (217 aa).

Residues 38-106 (IRKFIDNELK…KVHINVIEIK (69 aa)) enclose the KH type-2 domain.

Belongs to the universal ribosomal protein uS3 family. In terms of assembly, part of the 30S ribosomal subunit. Forms a tight complex with proteins S10 and S14.

Its function is as follows. Binds the lower part of the 30S subunit head. Binds mRNA in the 70S ribosome, positioning it for translation. This chain is Small ribosomal subunit protein uS3, found in Staphylococcus epidermidis (strain ATCC 35984 / DSM 28319 / BCRC 17069 / CCUG 31568 / BM 3577 / RP62A).